The chain runs to 66 residues: Large ribosomal subunit protein bL33c (66 aa).

This sequence belongs to the bacterial ribosomal protein bL33 family.

Its subcellular location is the plastid. The protein localises to the chloroplast. The sequence is that of Large ribosomal subunit protein bL33c from Solanum bulbocastanum (Wild potato).